Consider the following 215-residue polypeptide: FMN-dependent NADH:quinone oxidoreductase (215 aa).

Residue 17–19 participates in FMN binding; the sequence is SAS.

Belongs to the azoreductase type 1 family. As to quaternary structure, homodimer. FMN serves as cofactor.

It carries out the reaction 2 a quinone + NADH + H(+) = 2 a 1,4-benzosemiquinone + NAD(+). The enzyme catalyses N,N-dimethyl-1,4-phenylenediamine + anthranilate + 2 NAD(+) = 2-(4-dimethylaminophenyl)diazenylbenzoate + 2 NADH + 2 H(+). Quinone reductase that provides resistance to thiol-specific stress caused by electrophilic quinones. Its function is as follows. Also exhibits azoreductase activity. Catalyzes the reductive cleavage of the azo bond in aromatic azo compounds to the corresponding amines. This Clostridium botulinum (strain Alaska E43 / Type E3) protein is FMN-dependent NADH:quinone oxidoreductase.